The sequence spans 284 residues: D-tagatose-1,6-bisphosphate aldolase subunit GatY (284 aa).

Catalysis depends on aspartate 82, which acts as the Proton donor. Positions 83 and 180 each coordinate Zn(2+). Position 181 (glycine 181) interacts with dihydroxyacetone phosphate. Residue histidine 208 coordinates Zn(2+). Residues 209 to 211 (GAS) and 230 to 233 (NVAT) contribute to the dihydroxyacetone phosphate site.

This sequence belongs to the class II fructose-bisphosphate aldolase family. TagBP aldolase GatY subfamily. As to quaternary structure, forms a complex with GatZ. The cofactor is Zn(2+).

It catalyses the reaction D-tagatofuranose 1,6-bisphosphate = D-glyceraldehyde 3-phosphate + dihydroxyacetone phosphate. It functions in the pathway carbohydrate metabolism; D-tagatose 6-phosphate degradation; D-glyceraldehyde 3-phosphate and glycerone phosphate from D-tagatose 6-phosphate: step 2/2. Its function is as follows. Catalytic subunit of the tagatose-1,6-bisphosphate aldolase GatYZ, which catalyzes the reversible aldol condensation of dihydroxyacetone phosphate (DHAP or glycerone-phosphate) with glyceraldehyde 3-phosphate (G3P) to produce tagatose 1,6-bisphosphate (TBP). Requires GatZ subunit for full activity and stability. Is involved in the catabolism of galactitol. The sequence is that of D-tagatose-1,6-bisphosphate aldolase subunit GatY from Shigella flexneri.